The following is a 332-amino-acid chain: DNA-directed RNA polymerase subunit alpha (332 aa).

Residues 1–232 (MKGYLKDFLK…DQLSVFVDLE (232 aa)) are alpha N-terminal domain (alpha-NTD). An alpha C-terminal domain (alpha-CTD) region spans residues 247 to 332 (IDPVLLRPID…SLGDRARIAG (86 aa)).

It belongs to the RNA polymerase alpha chain family. In terms of assembly, homodimer. The RNAP catalytic core consists of 2 alpha, 1 beta, 1 beta' and 1 omega subunit. When a sigma factor is associated with the core the holoenzyme is formed, which can initiate transcription.

It carries out the reaction RNA(n) + a ribonucleoside 5'-triphosphate = RNA(n+1) + diphosphate. In terms of biological role, DNA-dependent RNA polymerase catalyzes the transcription of DNA into RNA using the four ribonucleoside triphosphates as substrates. The chain is DNA-directed RNA polymerase subunit alpha from Halorhodospira halophila (strain DSM 244 / SL1) (Ectothiorhodospira halophila (strain DSM 244 / SL1)).